Here is an 814-residue protein sequence, read N- to C-terminus: Acyl-coenzyme A dehydrogenase (814 aa).

Glu497 (proton acceptor) is an active-site residue.

This sequence belongs to the acyl-CoA dehydrogenase family. FAD serves as cofactor.

It carries out the reaction a medium-chain 2,3-saturated fatty acyl-CoA + oxidized [electron-transfer flavoprotein] + H(+) = a medium-chain (2E)-enoyl-CoA + reduced [electron-transfer flavoprotein]. The catalysed reaction is a long-chain 2,3-saturated fatty acyl-CoA + oxidized [electron-transfer flavoprotein] + H(+) = a long-chain (2E)-enoyl-CoA + reduced [electron-transfer flavoprotein]. It participates in lipid metabolism; fatty acid beta-oxidation. Its function is as follows. Catalyzes the dehydrogenation of acyl-coenzymes A (acyl-CoAs) to 2-enoyl-CoAs, the first step of the beta-oxidation cycle of fatty acid degradation. Is required for the utilization of medium- and long-chain fatty acids as sole carbon sources for growth. Is needed for bacterial survival during carbone-source starvation. This chain is Acyl-coenzyme A dehydrogenase (fadE), found in Salmonella typhi.